A 429-amino-acid chain; its full sequence is Glutamate-1-semialdehyde 2,1-aminomutase (429 aa).

An N6-(pyridoxal phosphate)lysine modification is found at Lys267.

It belongs to the class-III pyridoxal-phosphate-dependent aminotransferase family. HemL subfamily. As to quaternary structure, homodimer. It depends on pyridoxal 5'-phosphate as a cofactor.

Its subcellular location is the cytoplasm. It catalyses the reaction (S)-4-amino-5-oxopentanoate = 5-aminolevulinate. It functions in the pathway porphyrin-containing compound metabolism; protoporphyrin-IX biosynthesis; 5-aminolevulinate from L-glutamyl-tRNA(Glu): step 2/2. This chain is Glutamate-1-semialdehyde 2,1-aminomutase, found in Anaeromyxobacter sp. (strain Fw109-5).